Here is a 431-residue protein sequence, read N- to C-terminus: UDP-N-acetylglucosamine 1-carboxyvinyltransferase (431 aa).

Position 25–26 (25–26 (KN)) interacts with phosphoenolpyruvate. R101 lines the UDP-N-acetyl-alpha-D-glucosamine pocket. The active-site Proton donor is the C125. C125 bears the 2-(S-cysteinyl)pyruvic acid O-phosphothioketal mark. UDP-N-acetyl-alpha-D-glucosamine contacts are provided by D317 and I339.

It belongs to the EPSP synthase family. MurA subfamily.

The protein resides in the cytoplasm. The catalysed reaction is phosphoenolpyruvate + UDP-N-acetyl-alpha-D-glucosamine = UDP-N-acetyl-3-O-(1-carboxyvinyl)-alpha-D-glucosamine + phosphate. The protein operates within cell wall biogenesis; peptidoglycan biosynthesis. Its function is as follows. Cell wall formation. Adds enolpyruvyl to UDP-N-acetylglucosamine. The polypeptide is UDP-N-acetylglucosamine 1-carboxyvinyltransferase (Thermobifida fusca (strain YX)).